The sequence spans 206 residues: Holliday junction branch migration complex subunit RuvA (206 aa).

Residues methionine 1–isoleucine 63 are domain I. Residues aspartate 64–glycine 142 form a domain II region. Residues glycine 143 to isoleucine 153 are flexible linker. The segment at alanine 154–lysine 206 is domain III.

Belongs to the RuvA family. In terms of assembly, homotetramer. Forms an RuvA(8)-RuvB(12)-Holliday junction (HJ) complex. HJ DNA is sandwiched between 2 RuvA tetramers; dsDNA enters through RuvA and exits via RuvB. An RuvB hexamer assembles on each DNA strand where it exits the tetramer. Each RuvB hexamer is contacted by two RuvA subunits (via domain III) on 2 adjacent RuvB subunits; this complex drives branch migration. In the full resolvosome a probable DNA-RuvA(4)-RuvB(12)-RuvC(2) complex forms which resolves the HJ.

The protein resides in the cytoplasm. Functionally, the RuvA-RuvB-RuvC complex processes Holliday junction (HJ) DNA during genetic recombination and DNA repair, while the RuvA-RuvB complex plays an important role in the rescue of blocked DNA replication forks via replication fork reversal (RFR). RuvA specifically binds to HJ cruciform DNA, conferring on it an open structure. The RuvB hexamer acts as an ATP-dependent pump, pulling dsDNA into and through the RuvAB complex. HJ branch migration allows RuvC to scan DNA until it finds its consensus sequence, where it cleaves and resolves the cruciform DNA. This is Holliday junction branch migration complex subunit RuvA from Corynebacterium glutamicum (strain ATCC 13032 / DSM 20300 / JCM 1318 / BCRC 11384 / CCUG 27702 / LMG 3730 / NBRC 12168 / NCIMB 10025 / NRRL B-2784 / 534).